A 476-amino-acid polypeptide reads, in one-letter code: Cytosolic iron-sulfur assembly component 3 (476 aa).

The residue at position 2 (Ala2) is an N-acetylalanine. [4Fe-4S] cluster-binding residues include Cys24, Cys71, Cys74, Cys77, Cys190, Cys246, Cys395, and Cys399.

This sequence belongs to the NARF family. In terms of assembly, external component of the CIA complex. In the CIA complex, interacts directly with CIAO1 and MMS19.

Its function is as follows. Component of the cytosolic iron-sulfur protein assembly (CIA) complex, a multiprotein complex that mediates the incorporation of iron-sulfur cluster into extramitochondrial Fe/S proteins. Seems to negatively regulate the level of HIF1A expression, although this effect could be indirect. The chain is Cytosolic iron-sulfur assembly component 3 from Pongo abelii (Sumatran orangutan).